The sequence spans 303 residues: Elongation factor Ts (303 aa).

The interval 79 to 82 (TDFT) is involved in Mg(2+) ion dislocation from EF-Tu.

It belongs to the EF-Ts family.

It localises to the cytoplasm. Associates with the EF-Tu.GDP complex and induces the exchange of GDP to GTP. It remains bound to the aminoacyl-tRNA.EF-Tu.GTP complex up to the GTP hydrolysis stage on the ribosome. This Magnetococcus marinus (strain ATCC BAA-1437 / JCM 17883 / MC-1) protein is Elongation factor Ts.